An 805-amino-acid polypeptide reads, in one-letter code: Shutoff protein (805 aa).

The segment at 1-88 (MESVEKEDSL…QVGRGDQRHG (88 aa)) is disordered. Polar residues predominate over residues 18–29 (TTASTDAANAPT). Basic and acidic residues-rich tracts occupy residues 59–70 (RSVPTEDKKQDQ) and 79–88 (QVGRGDQRHG). Residues 280-345 (VMSELIVRRA…AVLVTVELEC (66 aa)) are binding to host EIF4G. The 119-residue stretch at 348–466 (RFFADPEMQR…DLWTAFNERS (119 aa)) folds into the RRM domain. Phosphotyrosine; by host is present on residues Y365 and Y682. Residues 684–805 (DPQSGEELNP…AGTACSPTQP (122 aa)) form a disordered region. Residues 726–742 (GRGGILGQSGRGGFGRG) show a composition bias toward gly residues. Basic residues predominate over residues 754–763 (RSFRGRRGVR).

This sequence belongs to the adenoviridae shutoff protein family. In terms of assembly, monomer. Interacts with hexon protein; this interaction allows chaperoning and trimerization of hexon proteins. Interacts (via N-terminus) with host initiation factor EIF4G (via C-terminus). Interacts (via RRM domain) with viral mRNAs that contain the tripartite leader; this interaction allows ribosome shunting and expression of viral late mRNAs. Might be cleaved by the viral protease. In terms of processing, phosphorylated. Tyrosine phosphorylation enhances preferential binding to tripartite leader mRNAs and allows ribosome shunting. Post-translationally, methylated. Asymmetric dimethylation by host PRMT1 of the Arg/Gly-rich region may regulate shutoff protein binding to hexon and promote the capsid assembly in the nucleus.

It is found in the host cytoplasm. In terms of biological role, protein that inhibits host translation while promoting late viral translation by ribosome shunting. Blocks host cap-dependent translation by binding to eIF4G, displacing MKNK1 from cap initiation complexes and preventing EIF4E phosphorylation. Binds to the tripartite leader sequence of viral late mRNAs and recruits host eIF4G, PABPC1/poly-A binding protein and 40S ribosomes subunits on viral mRNAs, allowing ribosome shunting and efficient translation of late viral mRNAs even though conventional translation via ribosome scanning from the cap has been shut off in the host cell. During assembly, acts as a chaperone protein that helps hexon proteins assembly into trimers. The polypeptide is Shutoff protein (Homo sapiens (Human)).